The primary structure comprises 365 residues: Uroporphyrinogen decarboxylase (365 aa).

Residues 27 to 31 (RQAGR), Asp-77, Tyr-154, Thr-209, and His-327 contribute to the substrate site.

This sequence belongs to the uroporphyrinogen decarboxylase family. Homodimer.

It is found in the cytoplasm. It catalyses the reaction uroporphyrinogen III + 4 H(+) = coproporphyrinogen III + 4 CO2. It participates in porphyrin-containing compound metabolism; protoporphyrin-IX biosynthesis; coproporphyrinogen-III from 5-aminolevulinate: step 4/4. Catalyzes the decarboxylation of four acetate groups of uroporphyrinogen-III to yield coproporphyrinogen-III. This chain is Uroporphyrinogen decarboxylase, found in Nitrosospira multiformis (strain ATCC 25196 / NCIMB 11849 / C 71).